A 941-amino-acid chain; its full sequence is Probable lipoxygenase 8, chloroplastic (941 aa).

2 disordered regions span residues 1–22 (MLRP…SSSS) and 45–68 (LIAG…VVRC). The N-terminal 67 residues, 1–67 (MLRPQLNPSS…QQGRQRVVVR (67 aa)), are a transit peptide targeting the chloroplast. In terms of domain architecture, PLAT spans 100 to 236 (AVATIKVTVE…SIDEGTPGKR (137 aa)). In terms of domain architecture, Lipoxygenase spans 242–941 (AYLPGQTPAG…GMGIPNSTSI (700 aa)). 2 disordered regions span residues 255 to 274 (YREE…READ) and 288 to 331 (NPDS…RKGN). Residues 319 to 331 (SKKDPKSETRKGN) show a composition bias toward basic and acidic residues. Positions 598, 603, 790, 794, and 941 each coordinate Fe cation.

The protein belongs to the lipoxygenase family. It depends on Fe cation as a cofactor.

Its subcellular location is the plastid. The protein localises to the chloroplast. The enzyme catalyses (9Z,12Z)-octadecadienoate + O2 = (13S)-hydroperoxy-(9Z,11E)-octadecadienoate. It carries out the reaction (9Z,12Z,15Z)-octadecatrienoate + O2 = (13S)-hydroperoxy-(9Z,11E,15Z)-octadecatrienoate. It functions in the pathway lipid metabolism; oxylipin biosynthesis. Its function is as follows. Plant lipoxygenase may be involved in a number of diverse aspects of plant physiology including growth and development, pest resistance, and senescence or responses to wounding. It catalyzes the hydroperoxidation of lipids containing a cis,cis-1,4-pentadiene structure. This chain is Probable lipoxygenase 8, chloroplastic (CM-LOX2), found in Oryza sativa subsp. japonica (Rice).